A 250-amino-acid polypeptide reads, in one-letter code: 2,3-bisphosphoglycerate-dependent phosphoglycerate mutase (250 aa).

Residues 10 to 17 (RHGESQWN), 23 to 24 (TG), Arg62, 89 to 92 (ERHY), Lys100, 116 to 117 (RR), and 185 to 186 (GN) contribute to the substrate site. The Tele-phosphohistidine intermediate role is filled by His11. Residue Glu89 is the Proton donor/acceptor of the active site.

Belongs to the phosphoglycerate mutase family. BPG-dependent PGAM subfamily. In terms of assembly, homodimer.

It carries out the reaction (2R)-2-phosphoglycerate = (2R)-3-phosphoglycerate. It participates in carbohydrate degradation; glycolysis; pyruvate from D-glyceraldehyde 3-phosphate: step 3/5. Catalyzes the interconversion of 2-phosphoglycerate and 3-phosphoglycerate. The sequence is that of 2,3-bisphosphoglycerate-dependent phosphoglycerate mutase from Pectobacterium atrosepticum (strain SCRI 1043 / ATCC BAA-672) (Erwinia carotovora subsp. atroseptica).